Consider the following 89-residue polypeptide: Translation initiation factor IF-1, chloroplastic (89 aa).

In terms of domain architecture, S1-like spans Met1–Pro73.

Belongs to the IF-1 family. Component of the 30S ribosomal translation pre-initiation complex which assembles on the 30S ribosome in the order IF-2 and IF-3, IF-1 and N-formylmethionyl-tRNA(fMet); mRNA recruitment can occur at any time during PIC assembly.

The protein resides in the plastid. Its subcellular location is the chloroplast. Functionally, one of the essential components for the initiation of protein synthesis. Stabilizes the binding of IF-2 and IF-3 on the 30S subunit to which N-formylmethionyl-tRNA(fMet) subsequently binds. Helps modulate mRNA selection, yielding the 30S pre-initiation complex (PIC). Upon addition of the 50S ribosomal subunit IF-1, IF-2 and IF-3 are released leaving the mature 70S translation initiation complex. This chain is Translation initiation factor IF-1, chloroplastic, found in Jasminum nudiflorum (Winter jasmine).